The following is a 239-amino-acid chain: Ribonuclease HII (239 aa).

One can recognise an RNase H type-2 domain in the interval 18-231 (KIIVGLDEAG…SKNLLKEIEE (214 aa)). The a divalent metal cation site is built by Asp24, Glu25, and Asp125.

This sequence belongs to the RNase HII family. It depends on Mn(2+) as a cofactor. The cofactor is Mg(2+).

The protein localises to the cytoplasm. It catalyses the reaction Endonucleolytic cleavage to 5'-phosphomonoester.. Its function is as follows. Endonuclease that specifically degrades the RNA of RNA-DNA hybrids. The sequence is that of Ribonuclease HII from Methanococcus maripaludis (strain C7 / ATCC BAA-1331).